The primary structure comprises 396 residues: Elongation factor Tu (396 aa).

The region spanning 10-206 is the tr-type G domain; it reads KPHCNIGTIG…NVDEYIPQPE (197 aa). The G1 stretch occupies residues 19–26; it reads GHVDHGKT. Residue 19–26 participates in GTP binding; the sequence is GHVDHGKT. A Mg(2+)-binding site is contributed by Thr26. The segment at 60–64 is G2; it reads GITIS. The segment at 81–84 is G3; that stretch reads DCPG. GTP contacts are provided by residues 81-85 and 136-139; these read DCPGH and NKCD. The interval 136-139 is G4; sequence NKCD. The interval 174–176 is G5; that stretch reads SAL.

This sequence belongs to the TRAFAC class translation factor GTPase superfamily. Classic translation factor GTPase family. EF-Tu/EF-1A subfamily. Monomer.

The protein localises to the cytoplasm. The catalysed reaction is GTP + H2O = GDP + phosphate + H(+). Functionally, GTP hydrolase that promotes the GTP-dependent binding of aminoacyl-tRNA to the A-site of ribosomes during protein biosynthesis. This chain is Elongation factor Tu, found in Afipia carboxidovorans (strain ATCC 49405 / DSM 1227 / KCTC 32145 / OM5) (Oligotropha carboxidovorans).